Reading from the N-terminus, the 222-residue chain is Cytidylate kinase (222 aa).

An ATP-binding site is contributed by 7-15 (GPSASGKSS).

The protein belongs to the cytidylate kinase family. Type 1 subfamily.

The protein localises to the cytoplasm. It carries out the reaction CMP + ATP = CDP + ADP. The catalysed reaction is dCMP + ATP = dCDP + ADP. In Borrelia turicatae (strain 91E135), this protein is Cytidylate kinase.